The following is a 241-amino-acid chain: uncharacterized protein (241 aa).

A Cupin type-2 domain is found at 22-78 (SHKHAYSQFLFPLEGSIDLETEGRQVKLNPDHFLYIPPQCEHRFRSIGRNECLVLDV). Positions 137 to 235 (YASIAYIHSH…GMPPRLYRNT (99 aa)) constitute an HTH araC/xylS-type domain. 2 DNA-binding regions (H-T-H motif) span residues 154 to 175 (KKLAEIEHYHPAYYSSWFKKQT) and 202 to 225 (LTVVSEALGFQNLSSFTRWFTKST).

This is an uncharacterized protein from Bacillus subtilis (strain 168).